The chain runs to 141 residues: Vesicle-associated membrane protein 4 (141 aa).

Residues 1–51 (MPPKFKRHLNDDDVTGSVKSERRNLLEDDSDEEEDFFLRGPSGPRFGPRND) form a disordered region. The Cytoplasmic segment spans residues 1–115 (MPPKFKRHLN…RRQMWWRGCK (115 aa)). Residues serine 17 and serine 30 each carry the phosphoserine modification. The 61-residue stretch at 52-112 (KIKHVQNQVD…KQLRRQMWWR (61 aa)) folds into the v-SNARE coiled-coil homology domain. Residues 116-136 (IKAIMALVAVILLLVIIILIV) form a helical; Anchor for type IV membrane protein membrane-spanning segment. The Vesicular portion of the chain corresponds to 137–141 (VKYRT).

It belongs to the synaptobrevin family. As to quaternary structure, identified in a complex containing STX6, STX12, VAMP4 and VTI1A. Interacts with BAIAP3; this interaction is increased in the presence of calcium.

Its subcellular location is the golgi apparatus. It localises to the trans-Golgi network membrane. Involved in the pathway that functions to remove an inhibitor (probably synaptotagmin-4) of calcium-triggered exocytosis during the maturation of secretory granules. May be a marker for this sorting pathway that is critical for remodeling the secretory response of granule. The sequence is that of Vesicle-associated membrane protein 4 (VAMP4) from Bos taurus (Bovine).